We begin with the raw amino-acid sequence, 318 residues long: Nodulation protein D 2 (318 aa).

An HTH lysR-type domain is found at L6–T63. The segment at residues L23–G42 is a DNA-binding region (H-T-H motif).

Belongs to the LysR transcriptional regulatory family.

In terms of biological role, nodD regulates the expression of the nodABCFE genes which encode other nodulation proteins. NodD is also a negative regulator of its own expression. Binds flavonoids as inducers. This is Nodulation protein D 2 (nodD2) from Rhizobium leguminosarum bv. phaseoli.